The chain runs to 144 residues: Large ribosomal subunit protein uL15 (144 aa).

Positions 1–54 (MRLNTLSPAPGRVSAKKRVGRGIGSGLGKTAGRGHKGLKSRSGGSVKPGFEGGQ) are disordered. Residues 21–31 (RGIGSGLGKTA) show a composition bias toward gly residues.

Belongs to the universal ribosomal protein uL15 family. Part of the 50S ribosomal subunit.

Functionally, binds to the 23S rRNA. In Saccharophagus degradans (strain 2-40 / ATCC 43961 / DSM 17024), this protein is Large ribosomal subunit protein uL15.